The sequence spans 261 residues: RING finger protein 208 (261 aa).

A disordered region spans residues 83–106 (PALEGAPHTPPLPRRPRKGSSELG). The residue at position 102 (Ser102) is a Phosphoserine. The RING-type zinc-finger motif lies at 143–190 (CPTCGHSYNVTQRRPRVLSCLHSVCEQCLQILYESCPKYKFISCPTCR).

The polypeptide is RING finger protein 208 (RNF208) (Homo sapiens (Human)).